The primary structure comprises 220 residues: Thiopurine S-methyltransferase (220 aa).

Trp-14, Leu-49, Glu-70, and Arg-127 together coordinate S-adenosyl-L-methionine.

It belongs to the class I-like SAM-binding methyltransferase superfamily. TPMT family.

The protein localises to the cytoplasm. The enzyme catalyses S-adenosyl-L-methionine + a thiopurine = S-adenosyl-L-homocysteine + a thiopurine S-methylether.. The sequence is that of Thiopurine S-methyltransferase from Gluconobacter oxydans (strain 621H) (Gluconobacter suboxydans).